The following is a 151-amino-acid chain: Protein SprT-like (151 aa).

The region spanning 7–146 (QSLTESIAIK…CGRCGGILKL (140 aa)) is the SprT-like domain. Residue His-67 coordinates Zn(2+). Residue Glu-68 is part of the active site. Zn(2+) is bound at residue His-71.

Belongs to the SprT family. The cofactor is Zn(2+).

The protein resides in the cytoplasm. The chain is Protein SprT-like from Staphylococcus epidermidis (strain ATCC 35984 / DSM 28319 / BCRC 17069 / CCUG 31568 / BM 3577 / RP62A).